We begin with the raw amino-acid sequence, 290 residues long: Syntaxin (290 aa).

The interval 1–22 (MTKDRLAALKAAQSDDDDNDDV) is disordered. Residues 1–267 (MTKDRLAALK…KYQSKARRKK (267 aa)) are Cytoplasmic-facing. Positions 32–114 (MEEFFEQVDE…EEHTNKSSAD (83 aa)) form a coiled coil. The t-SNARE coiled-coil homology domain maps to 194–256 (LADIEARHND…ETAKMDTKKA (63 aa)). Residues 268–288 (IMILVCLAILIIILVGVIGGT) form a helical; Anchor for type IV membrane protein membrane-spanning segment. Residues 289–290 (LG) are Extracellular-facing.

This sequence belongs to the syntaxin family.

It localises to the membrane. Its function is as follows. Potentially involved in docking of synaptic vesicles at presynaptic active zones. In Aplysia californica (California sea hare), this protein is Syntaxin.